A 200-amino-acid polypeptide reads, in one-letter code: NAD(P)H dehydrogenase (quinone) (200 aa).

The 187-residue stretch at 4 to 190 folds into the Flavodoxin-like domain; it reads VLVLYYSTYG…EGARFQGRHV (187 aa). FMN contacts are provided by residues 10–15 and 78–80; these read STYGHV and TRY. Tyrosine 12 serves as a coordination point for NAD(+). Tryptophan 98 contacts substrate. Residues 113–119 and histidine 134 contribute to the FMN site; that span reads STASQHG.

Belongs to the WrbA family. Requires FMN as cofactor.

It carries out the reaction a quinone + NADH + H(+) = a quinol + NAD(+). It catalyses the reaction a quinone + NADPH + H(+) = a quinol + NADP(+). This Methylobacterium radiotolerans (strain ATCC 27329 / DSM 1819 / JCM 2831 / NBRC 15690 / NCIMB 10815 / 0-1) protein is NAD(P)H dehydrogenase (quinone).